The following is a 380-amino-acid chain: Cytochrome b (380 aa).

The next 4 membrane-spanning stretches (helical) occupy residues 34–54 (FGSL…LLAM), 78–99 (WLIR…YLHI), 114–134 (WNTG…GYVL), and 179–199 (FFAL…IHLT). Residues His-84 and His-98 each coordinate heme b. Residues His-183 and His-197 each coordinate heme b. Residue His-202 participates in a ubiquinone binding. The next 4 membrane-spanning stretches (helical) occupy residues 227-247 (LKDA…ALFS), 289-309 (LGGV…PLLH), 321-341 (LSQL…WIGS), and 348-368 (FIII…ILFP).

It belongs to the cytochrome b family. As to quaternary structure, the cytochrome bc1 complex contains 11 subunits: 3 respiratory subunits (MT-CYB, CYC1 and UQCRFS1), 2 core proteins (UQCRC1 and UQCRC2) and 6 low-molecular weight proteins (UQCRH/QCR6, UQCRB/QCR7, UQCRQ/QCR8, UQCR10/QCR9, UQCR11/QCR10 and a cleavage product of UQCRFS1). This cytochrome bc1 complex then forms a dimer. Heme b is required as a cofactor.

It is found in the mitochondrion inner membrane. Its function is as follows. Component of the ubiquinol-cytochrome c reductase complex (complex III or cytochrome b-c1 complex) that is part of the mitochondrial respiratory chain. The b-c1 complex mediates electron transfer from ubiquinol to cytochrome c. Contributes to the generation of a proton gradient across the mitochondrial membrane that is then used for ATP synthesis. This chain is Cytochrome b (MT-CYB), found in Oceanodroma tethys (Wedge-rumped storm-petrel).